The chain runs to 907 residues: Isoleucine--tRNA ligase (907 aa).

The short motif at 57–67 is the 'HIGH' region element; that stretch reads PFANGKAHMGS. An L-isoleucyl-5'-AMP-binding site is contributed by E549. Positions 590–594 match the 'KMSKS' region motif; that stretch reads KLSKS. An ATP-binding site is contributed by K593. Positions 867, 870, 889, and 892 each coordinate Zn(2+).

The protein belongs to the class-I aminoacyl-tRNA synthetase family. IleS type 1 subfamily. As to quaternary structure, monomer. Zn(2+) serves as cofactor.

It is found in the cytoplasm. The enzyme catalyses tRNA(Ile) + L-isoleucine + ATP = L-isoleucyl-tRNA(Ile) + AMP + diphosphate. Catalyzes the attachment of isoleucine to tRNA(Ile). As IleRS can inadvertently accommodate and process structurally similar amino acids such as valine, to avoid such errors it has two additional distinct tRNA(Ile)-dependent editing activities. One activity is designated as 'pretransfer' editing and involves the hydrolysis of activated Val-AMP. The other activity is designated 'posttransfer' editing and involves deacylation of mischarged Val-tRNA(Ile). The polypeptide is Isoleucine--tRNA ligase (Methylacidiphilum infernorum (isolate V4) (Methylokorus infernorum (strain V4))).